The sequence spans 501 residues: Probable cytochrome P450 6a20 (501 aa).

Heme is bound at residue Cys445.

The protein belongs to the cytochrome P450 family. It depends on heme as a cofactor.

It localises to the endoplasmic reticulum membrane. It is found in the microsome membrane. In terms of biological role, may be involved in the metabolism of insect hormones and in the breakdown of synthetic insecticides. This is Probable cytochrome P450 6a20 (Cyp6a20) from Drosophila melanogaster (Fruit fly).